Here is a 194-residue protein sequence, read N- to C-terminus: GTP cyclohydrolase 1 (194 aa).

Zn(2+) contacts are provided by C83, H86, and C155.

This sequence belongs to the GTP cyclohydrolase I family. Toroid-shaped homodecamer, composed of two pentamers of five dimers.

It carries out the reaction GTP + H2O = 7,8-dihydroneopterin 3'-triphosphate + formate + H(+). It functions in the pathway cofactor biosynthesis; 7,8-dihydroneopterin triphosphate biosynthesis; 7,8-dihydroneopterin triphosphate from GTP: step 1/1. The chain is GTP cyclohydrolase 1 from Streptococcus pyogenes serotype M3 (strain ATCC BAA-595 / MGAS315).